We begin with the raw amino-acid sequence, 520 residues long: Cytochrome P450 72A397 (520 aa).

A helical membrane pass occupies residues 14–34; the sequence is AVAVAVVVVGWAWKVLNWVWV. Position 468 (cysteine 468) interacts with heme.

The protein belongs to the cytochrome P450 family. The cofactor is heme.

It is found in the membrane. The enzyme catalyses oleanolate + reduced [NADPH--hemoprotein reductase] + O2 = hederagenin + oxidized [NADPH--hemoprotein reductase] + H2O + H(+). Its function is as follows. Catalyzes the oxidation of oleanolate at the C-23 position to form hederagenin. This chain is Cytochrome P450 72A397, found in Kalopanax septemlobus (Castor aralia).